Reading from the N-terminus, the 63-residue chain is MNFNKIFVFVALILAISLGNSEAGWLRKLGKKIERIGQHTRDASIQVLGIAQQAANVAATARG.

Positions methionine 1–alanine 23 are cleaved as a signal peptide. Arginine 62 is modified (arginine amide).

This sequence belongs to the cecropin family. Strongly expressed in larval, pupal and adult fat body and hemocytes after injection of bacteria. Maximal expression is seen in pupae.

Its subcellular location is the secreted. Cecropins have lytic and antibacterial activity against several Gram-positive and Gram-negative bacteria. The protein is Cecropin-B (CecB) of Drosophila melanogaster (Fruit fly).